We begin with the raw amino-acid sequence, 339 residues long: Fructose-1,6-bisphosphatase class 1 (339 aa).

Residues glutamate 94, aspartate 116, leucine 118, and aspartate 119 each contribute to the Mg(2+) site. Residues 119-122, asparagine 210, and lysine 276 contribute to the substrate site; that span reads DGSS. Residue glutamate 282 participates in Mg(2+) binding.

Belongs to the FBPase class 1 family. Homotetramer. Mg(2+) serves as cofactor.

It localises to the cytoplasm. It carries out the reaction beta-D-fructose 1,6-bisphosphate + H2O = beta-D-fructose 6-phosphate + phosphate. It participates in carbohydrate biosynthesis; gluconeogenesis. This Burkholderia ambifaria (strain MC40-6) protein is Fructose-1,6-bisphosphatase class 1.